Consider the following 457-residue polypeptide: NADP-specific glutamate dehydrogenase (457 aa).

Lys113 is an active-site residue.

This sequence belongs to the Glu/Leu/Phe/Val dehydrogenases family. As to quaternary structure, homohexamer.

It carries out the reaction L-glutamate + NADP(+) + H2O = 2-oxoglutarate + NH4(+) + NADPH + H(+). In Tuber borchii (White truffle), this protein is NADP-specific glutamate dehydrogenase (GDH).